The following is an 858-amino-acid chain: DNA mismatch repair protein MutS (858 aa).

618–625 (GPNMGGKS) is a binding site for ATP.

It belongs to the DNA mismatch repair MutS family.

In terms of biological role, this protein is involved in the repair of mismatches in DNA. It is possible that it carries out the mismatch recognition step. This protein has a weak ATPase activity. This Shewanella woodyi (strain ATCC 51908 / MS32) protein is DNA mismatch repair protein MutS.